We begin with the raw amino-acid sequence, 442 residues long: 3-ketoacyl-CoA thiolase (442 aa).

The active-site Acyl-thioester intermediate is Cys105. Active-site proton acceptor residues include His398 and Cys428.

Belongs to the thiolase-like superfamily. Thiolase family. Heterotetramer of two alpha chains (FadJ) and two beta chains (FadI).

The protein localises to the cytoplasm. The enzyme catalyses an acyl-CoA + acetyl-CoA = a 3-oxoacyl-CoA + CoA. It participates in lipid metabolism; fatty acid beta-oxidation. In terms of biological role, catalyzes the final step of fatty acid oxidation in which acetyl-CoA is released and the CoA ester of a fatty acid two carbons shorter is formed. This is 3-ketoacyl-CoA thiolase from Aliivibrio fischeri (strain MJ11) (Vibrio fischeri).